Consider the following 1020-residue polypeptide: Non-canonical nonribosomal peptide synthetase hkm10 (1020 aa).

Positions 21-419 (QMLEDPDAIA…GRFDHQVKIR (399 aa)) are adenylation (A) domain. The region spanning 526–608 (QDKVPSEGAS…QLAHIVDRNQ (83 aa)) is the Carrier domain. The residue at position 568 (serine 568) is an O-(pantetheine 4'-phosphoryl)serine. Residues 652–894 (LTGATGFVGA…FVPIDYVTST (243 aa)) are short-chain dehydrogenase/reductase (R) domain.

Belongs to the NRP synthetase family.

It participates in secondary metabolite biosynthesis. Functionally, non-canonical nonribosomal peptide synthetase; part of the gene cluster that mediates the biosynthesis of hancockiamides, an unusual new family of N-cinnamoylated piperazines. The NRPS hkm10 and the NmrA-like reductase hkm9 are proposed to convert two molecules of L-Phe to the intermediary piperazine called xenocockiamide A. Xenocockiamide A is then converted to hancockiamide D via a series of hydroxylations and O-methylations. The tyrosinase hkm6 may catalyze an aromatic hydroxylation, then the 2-oxoglutarate-dependent Fe(II) dioxygenase hkm4 and the FAD-dependent phenol hydroxylase hkm7 may catalyze consecutive hydroxylations to install 2 more hydroxy groups, and the methyltransferase hkm8 probably catalyzes two methylations using 2 molecules of S-adenosyl-L-methionine (SAM). The NRPS hkm11 activates and transfers trans-cinnamate supplied by the PAL hkm12 to hancockiamide D and produces hancockiamide A. NRPS Hkm11 has the flexibility to tolerate the bulky hancockiamide G as a substrate and the absence of the acetyl-transferase hkm3 opens up the opportunity for hkm11 to introduce a second N-cinnamoyl moiety. The cytochrome P450 monooxygenase hkm5 catalyzes the methylenedioxy bridge formation, converting hancockiamide A into hancockiamide G. Hkm5 can also convert hancockiamide B into hancockiamide C, and hancockiamide D into hancockiamide H. The N-acetyltransferase hkm3 finally transfers an acetyl group to 1-N of piperazine, converting hancockiamide A into hancockiamide B and hancockiamide G into hancockiamide C. The protein is Non-canonical nonribosomal peptide synthetase hkm10 of Aspergillus hancockii.